The sequence spans 757 residues: Polymeric immunoglobulin receptor (757 aa).

Positions 1 to 18 (MSRLFLACLLAIFPVVSM) are cleaved as a signal peptide. The 108-residue stretch at 19–126 (KSPIFGPEEV…RGLNFDVSLE (108 aa)) folds into the Ig-like V-type 1; required for binding to polymeric IgA and IgM domain. The Extracellular segment spans residues 19 to 632 (KSPIFGPEEV…TGYSGSSKAL (614 aa)). Disulfide bonds link C40–C110, C56–C64, C152–C220, C257–C324, C271–C279, C370–C440, and C384–C394. N-linked (GlcNAc...) asparagine glycosylation is present at N83. 4 consecutive Ig-like V-type domains span residues 145–237 (GRTV…DLQV), 250–341 (RSSV…VQAW), 353–457 (ASPS…LKVV), and 461–560 (PSLK…VYVA). N-linked (GlcNAc...) asparagine glycans are attached at residues N420 and N468. Disulfide bonds link C481–C543, C485–C519, and C495–C502. Residues 607–627 (KDAAGGPGAPADPGRPTGYSG) form a disordered region. Residues 633 to 653 (VSTLVPLALVLVAGVVAIGVV) traverse the membrane as a helical segment. Residues 654–757 (RARHRKNVDR…AATQNGPTEA (104 aa)) are Cytoplasmic-facing. Phosphoserine occurs at positions 665, 674, 681, and 727. Over residues 679–688 (ENSRDFEGRD) the composition is skewed to basic and acidic residues. The interval 679–730 (ENSRDFEGRDNMGASPEAQETSLGGKDEFATTTEDTVESKEPKKAKRSSKEE) is disordered.

As to quaternary structure, interacts (mainly via CDR1-like domain) with dimeric IgA. Interacts (mainly via CDR2-like domain) with pentameric IgM. Either free or part of the secretory IgA (sIgA) complex that consists of two, four or five IgA monomers, and two additional non-Ig polypeptides, namely the JCHAIN and the secretory component (the proteolytic product of PIGR). Free secretory component interacts with bacterial antigens toxA of C.difficile and eae of E.coli. In the absence of dimeric IgA, Ser-727 is phosphorylated which allows PIGR to function normally. Post-translationally, N-glycosylated. N-glycosylation is required for anchoring IgA molecules to mucus, but is not necessary for Ig binding. In terms of tissue distribution, found in mammary gland, jejunum, lung, kidney and small intestine.

The protein resides in the cell membrane. The protein localises to the secreted. In terms of biological role, mediates selective transcytosis of polymeric IgA and IgM across mucosal epithelial cells. Binds polymeric IgA and IgM at the basolateral surface of epithelial cells. The complex is then transported across the cell to be secreted at the apical surface. During this process, a cleavage occurs that separates the extracellular (known as the secretory component) from the transmembrane segment. Functionally, through its N-linked glycans ensures anchoring of secretory IgA (sIgA) molecules to mucus lining the epithelial surface to neutralize extracellular pathogens. On its own (free form) may act as a non-specific microbial scavenger to prevent pathogen interaction with epithelial cells. The polypeptide is Polymeric immunoglobulin receptor (PIGR) (Bos taurus (Bovine)).